The following is a 316-amino-acid chain: 4-hydroxy-3-methylbut-2-enyl diphosphate reductase (316 aa).

C12 provides a ligand contact to [4Fe-4S] cluster. (2E)-4-hydroxy-3-methylbut-2-enyl diphosphate contacts are provided by H41 and H74. Dimethylallyl diphosphate-binding residues include H41 and H74. 2 residues coordinate isopentenyl diphosphate: H41 and H74. Residue C96 coordinates [4Fe-4S] cluster. H124 serves as a coordination point for (2E)-4-hydroxy-3-methylbut-2-enyl diphosphate. H124 serves as a coordination point for dimethylallyl diphosphate. Residue H124 coordinates isopentenyl diphosphate. The active-site Proton donor is E126. T169 contacts (2E)-4-hydroxy-3-methylbut-2-enyl diphosphate. Position 199 (C199) interacts with [4Fe-4S] cluster. (2E)-4-hydroxy-3-methylbut-2-enyl diphosphate-binding residues include S227, S228, N229, and S271. Residues S227, S228, N229, and S271 each coordinate dimethylallyl diphosphate. Isopentenyl diphosphate contacts are provided by S227, S228, N229, and S271.

Belongs to the IspH family. [4Fe-4S] cluster is required as a cofactor.

It catalyses the reaction isopentenyl diphosphate + 2 oxidized [2Fe-2S]-[ferredoxin] + H2O = (2E)-4-hydroxy-3-methylbut-2-enyl diphosphate + 2 reduced [2Fe-2S]-[ferredoxin] + 2 H(+). The catalysed reaction is dimethylallyl diphosphate + 2 oxidized [2Fe-2S]-[ferredoxin] + H2O = (2E)-4-hydroxy-3-methylbut-2-enyl diphosphate + 2 reduced [2Fe-2S]-[ferredoxin] + 2 H(+). It participates in isoprenoid biosynthesis; dimethylallyl diphosphate biosynthesis; dimethylallyl diphosphate from (2E)-4-hydroxy-3-methylbutenyl diphosphate: step 1/1. Its pathway is isoprenoid biosynthesis; isopentenyl diphosphate biosynthesis via DXP pathway; isopentenyl diphosphate from 1-deoxy-D-xylulose 5-phosphate: step 6/6. Catalyzes the conversion of 1-hydroxy-2-methyl-2-(E)-butenyl 4-diphosphate (HMBPP) into a mixture of isopentenyl diphosphate (IPP) and dimethylallyl diphosphate (DMAPP). Acts in the terminal step of the DOXP/MEP pathway for isoprenoid precursor biosynthesis. This is 4-hydroxy-3-methylbut-2-enyl diphosphate reductase from Stenotrophomonas maltophilia (strain R551-3).